Here is an 873-residue protein sequence, read N- to C-terminus: Protein SEY1 (873 aa).

Residues 1–21 (MVANGHFAGSADGQDSSSYEH) form a disordered region. Over 1–749 (MVANGHFAGS…KRSAIGGITQ (749 aa)) the chain is Cytoplasmic. The 259-residue stretch at 49–307 (GFNYHLISVF…IPADGFAVYA (259 aa)) folds into the GB1/RHD3-type G domain. 59-66 (GSQSTGKS) contributes to the GTP binding site. Residues 482 to 506 (SNYQQELSLYQKDLERTSGQLRRDE) adopt a coiled-coil conformation. A disordered region spans residues 676 to 703 (LDKWIGHTPSSATPADEEDLTPIGGVDD). Over residues 690 to 703 (ADEEDLTPIGGVDD) the composition is skewed to acidic residues. A helical transmembrane segment spans residues 750-770 (VPLYFYGLLFALGWNEILAVL). The Lumenal portion of the chain corresponds to 771–773 (RNP). Residues 774–794 (VYFLLLFVCAIGAYITYQLNL) form a helical membrane-spanning segment. The Cytoplasmic segment spans residues 795–873 (WGPIIKMTEA…EDVDDDDDDF (79 aa)). Residues 828 to 873 (RQAMAMSGARNATEEHEMSRLSRKPAERGGRKNRADEDVDDDDDDF) are disordered. The segment covering 839-863 (ATEEHEMSRLSRKPAERGGRKNRAD) has biased composition (basic and acidic residues). Over residues 864 to 873 (EDVDDDDDDF) the composition is skewed to acidic residues.

This sequence belongs to the TRAFAC class dynamin-like GTPase superfamily. GB1/RHD3 GTPase family. RHD3 subfamily.

The protein localises to the endoplasmic reticulum membrane. Its function is as follows. Cooperates with the reticulon proteins and tubule-shaping DP1 family proteins to generate and maintain the structure of the tubular endoplasmic reticulum network. Has GTPase activity, which is required for its function in ER organization. In Ajellomyces capsulatus (strain G186AR / H82 / ATCC MYA-2454 / RMSCC 2432) (Darling's disease fungus), this protein is Protein SEY1.